The primary structure comprises 568 residues: Oxygen-dependent choline dehydrogenase (568 aa).

Asp-8 to Glu-37 is an FAD binding site. The Proton acceptor role is filled by His-477.

This sequence belongs to the GMC oxidoreductase family. FAD serves as cofactor.

The catalysed reaction is choline + A = betaine aldehyde + AH2. It carries out the reaction betaine aldehyde + NAD(+) + H2O = glycine betaine + NADH + 2 H(+). It functions in the pathway amine and polyamine biosynthesis; betaine biosynthesis via choline pathway; betaine aldehyde from choline (cytochrome c reductase route): step 1/1. Its function is as follows. Involved in the biosynthesis of the osmoprotectant glycine betaine. Catalyzes the oxidation of choline to betaine aldehyde and betaine aldehyde to glycine betaine at the same rate. The sequence is that of Oxygen-dependent choline dehydrogenase from Pseudomonas syringae pv. syringae (strain B728a).